The sequence spans 254 residues: 5-oxoprolinase subunit A (254 aa).

It belongs to the LamB/PxpA family. As to quaternary structure, forms a complex composed of PxpA, PxpB and PxpC.

The catalysed reaction is 5-oxo-L-proline + ATP + 2 H2O = L-glutamate + ADP + phosphate + H(+). Catalyzes the cleavage of 5-oxoproline to form L-glutamate coupled to the hydrolysis of ATP to ADP and inorganic phosphate. The sequence is that of 5-oxoprolinase subunit A from Burkholderia lata (strain ATCC 17760 / DSM 23089 / LMG 22485 / NCIMB 9086 / R18194 / 383).